A 303-amino-acid chain; its full sequence is UDP-3-O-acyl-N-acetylglucosamine deacetylase (303 aa).

Zn(2+) is bound by residues His-78, His-237, and Asp-241. His-264 acts as the Proton donor in catalysis.

This sequence belongs to the LpxC family. Zn(2+) is required as a cofactor.

The catalysed reaction is a UDP-3-O-[(3R)-3-hydroxyacyl]-N-acetyl-alpha-D-glucosamine + H2O = a UDP-3-O-[(3R)-3-hydroxyacyl]-alpha-D-glucosamine + acetate. Its pathway is glycolipid biosynthesis; lipid IV(A) biosynthesis; lipid IV(A) from (3R)-3-hydroxytetradecanoyl-[acyl-carrier-protein] and UDP-N-acetyl-alpha-D-glucosamine: step 2/6. Its function is as follows. Catalyzes the hydrolysis of UDP-3-O-myristoyl-N-acetylglucosamine to form UDP-3-O-myristoylglucosamine and acetate, the committed step in lipid A biosynthesis. This Pseudomonas fluorescens (strain SBW25) protein is UDP-3-O-acyl-N-acetylglucosamine deacetylase.